Reading from the N-terminus, the 1041-residue chain is Serine-repeat antigen protein 6 (1041 aa).

The signal sequence occupies residues methionine 1–glycine 34. The N-linked (GlcNAc...) asparagine glycan is linked to asparagine 84. A compositionally biased stretch (low complexity) spans lysine 101 to glycine 111. A disordered region spans residues lysine 101–lysine 173. Over residues valine 114 to methionine 149 the composition is skewed to polar residues. Asparagine 130 is a glycosylation site (N-linked (GlcNAc...) asparagine). Residues serine 150 to serine 168 show a composition bias toward low complexity. Asparagine 459 carries an N-linked (GlcNAc...) asparagine glycan. Residues threonine 500–aspartate 577 are disordered. Low complexity predominate over residues proline 502–serine 515. Positions asparagine 521–lysine 545 are enriched in basic and acidic residues. Asparagine 554 carries an N-linked (GlcNAc...) asparagine glycan. Positions asparagine 564–tyrosine 574 are enriched in low complexity. N-linked (GlcNAc...) asparagine glycosylation is present at asparagine 583. The active site involves cysteine 654. Asparagine 684 is a glycosylation site (N-linked (GlcNAc...) asparagine). Active-site residues include histidine 820 and asparagine 845. Asparagine 984 is a glycosylation site (N-linked (GlcNAc...) asparagine).

Belongs to the peptidase C1 family. Just prior to merozoite egress from host erythrocytes, proteolytically cleaved by SUB1 to generate the active 75kDa form.

It localises to the parasitophorous vacuole lumen. Its subcellular location is the parasitophorous vacuole membrane. Its function is as follows. Cysteine protease which plays an essential role in merozoite egress from host erythrocytes. May cleave host SPTB/beta spectrin and ANK1/ankyrin-1 which disrupts host erythrocyte actin cytoskeleton and leads to host erythrocyte cell membrane rupture. The polypeptide is Serine-repeat antigen protein 6 (Plasmodium falciparum).